Here is a 1033-residue protein sequence, read N- to C-terminus: Kinesin-like protein KIN-4A (1033 aa).

Residues 11–366 form the Kinesin motor domain; sequence CVKVAVHVRP…LKYANRARNI (356 aa). Position 89-96 (89-96) interacts with ATP; the sequence is GQTGSGKT. The interval 443-462 is disordered; the sequence is QDGSPCSVESDGLKRNLRSR. Residues 453 to 462 show a composition bias toward basic and acidic residues; the sequence is DGLKRNLRSR. Positions 525-638 form a coiled coil; the sequence is ALKQHFGKKI…IKQEAEQFRQ (114 aa). The interval 763 to 785 is disordered; that stretch reads DELDSKGPSPSRGKNGCARGSSL. Positions 863–895 form a coiled coil; it reads IEIREMKEQLKELVGLLRQSELQRKEVENELKL.

The protein belongs to the TRAFAC class myosin-kinesin ATPase superfamily. Kinesin family. KIN-4 subfamily. In terms of assembly, homodimer. As to expression, expressed in cotton fibers.

The protein resides in the cytoplasm. In terms of biological role, kinesin-like motor protein involved in the control of the oriented deposition of cellulose microfibrils. The chain is Kinesin-like protein KIN-4A from Gossypium hirsutum (Upland cotton).